The sequence spans 555 residues: MRLLIPILIFALITTAVTWFYGRDDPDRWSVGGVWPLPKKIVYGSKNRTITYDKIGIDLGDKKDCDILLSMADNYMNKWLFPFPVEMKTGGTEDFIITVTVKDECPSGPPVHGASEEYLLRVSLTEAVINAQTVWGALRAMESLSHLVFYDHKSQEYQIRTVEIFDKPRFPVRGIMIDSSRHFLSVNVIKRQLEIMSMNKLNVLHWHLVDSESFPYTSVKFPELHGVGAYSPRHVYSREDIADVIAFARLRGIRVIPEFDLPGHTSSWRGRKGFLTECFDEKGVETFLPNLVDPMNEANFDFISEFLEEVTETFPDQFLHLGGDEVSDYIVECWERNKKIRKFMEEKGFGNDTVLLENYFFEKLYKIVENLKLKRKPIFWQEVFDNNIPDPNAVIHIWKGNTHEEIYEQVKNITSQNFPVIVSACWYLNYIKYGADWRDEIRGTAPSNSRYYYCDPTNFNGTVAQKELVWGGIAAIWGELVDNTNIEARLWPRASAAAERLWSPAEKTQRAEDAWPRMHELRCRLVSRGYRIQPNNNPDYCPFEFDEPPATKTEL.

The first 18 residues, 1–18, serve as a signal peptide directing secretion; it reads MRLLIPILIFALITTAVT. Asn47 is a glycosylation site (N-linked (GlcNAc...) asparagine). Glu325 serves as the catalytic Proton donor. Residues Asn351, Asn412, and Asn460 are each glycosylated (N-linked (GlcNAc...) asparagine).

It belongs to the glycosyl hydrolase 20 family. Expressed in coelomocytes and neurons of the pharyngeal region and nerve cord.

The protein resides in the lysosome. It carries out the reaction Hydrolysis of terminal non-reducing N-acetyl-D-hexosamine residues in N-acetyl-beta-D-hexosaminides.. In terms of biological role, responsible for the degradation of GM2 gangliosides, and a variety of other molecules containing terminal N-acetyl hexosamines. Degrades chitotriose. The chain is Beta-hexosaminidase A (hex-1) from Caenorhabditis elegans.